The sequence spans 916 residues: RNA-directed DNA polymerase from mobile element jockey (916 aa).

The Reverse transcriptase domain maps to 483–757 (SILRVGYFPK…HEYKYLGVIL (275 aa)). Positions 890 to 916 (RSASPRSRVRRRLKRHHPQDLLDRALT) are disordered. Residues 896-906 (SRVRRRLKRHH) show a composition bias toward basic residues. Over residues 907 to 916 (PQDLLDRALT) the composition is skewed to basic and acidic residues.

Mg(2+) is required as a cofactor. Mn(2+) serves as cofactor.

The enzyme catalyses DNA(n) + a 2'-deoxyribonucleoside 5'-triphosphate = DNA(n+1) + diphosphate. Inactivated by sulphydryl reagent. The polypeptide is RNA-directed DNA polymerase from mobile element jockey (jockey\pol) (Drosophila funebris (Fruit fly)).